The primary structure comprises 266 residues: Imidazole glycerol phosphate synthase subunit HisF (266 aa).

Residues aspartate 11 and aspartate 130 contribute to the active site.

Belongs to the HisA/HisF family. In terms of assembly, heterodimer of HisH and HisF.

The protein resides in the cytoplasm. The enzyme catalyses 5-[(5-phospho-1-deoxy-D-ribulos-1-ylimino)methylamino]-1-(5-phospho-beta-D-ribosyl)imidazole-4-carboxamide + L-glutamine = D-erythro-1-(imidazol-4-yl)glycerol 3-phosphate + 5-amino-1-(5-phospho-beta-D-ribosyl)imidazole-4-carboxamide + L-glutamate + H(+). It participates in amino-acid biosynthesis; L-histidine biosynthesis; L-histidine from 5-phospho-alpha-D-ribose 1-diphosphate: step 5/9. Functionally, IGPS catalyzes the conversion of PRFAR and glutamine to IGP, AICAR and glutamate. The HisF subunit catalyzes the cyclization activity that produces IGP and AICAR from PRFAR using the ammonia provided by the HisH subunit. The polypeptide is Imidazole glycerol phosphate synthase subunit HisF (Albidiferax ferrireducens (strain ATCC BAA-621 / DSM 15236 / T118) (Rhodoferax ferrireducens)).